Reading from the N-terminus, the 246-residue chain is Small ribosomal subunit protein uS2 (246 aa).

Belongs to the universal ribosomal protein uS2 family.

This chain is Small ribosomal subunit protein uS2, found in Pseudomonas aeruginosa (strain LESB58).